The primary structure comprises 322 residues: Homeobox protein DBX1-B (322 aa).

A DNA-binding region (homeobox) is located at residues 179–238 (GMLRRAVFSDVQRKALEKMFQKQKYISKPDRKKLATKLGLKDSQVKIWFQNRRMKWRNSK). 2 disordered regions span residues 238–266 (KERE…LSDV) and 296–322 (DLHF…ITVS). Over residues 312–322 (SESEDEEITVS) the composition is skewed to acidic residues.

This sequence belongs to the H2.0 homeobox family.

The protein resides in the nucleus. This chain is Homeobox protein DBX1-B (dbx1b), found in Danio rerio (Zebrafish).